We begin with the raw amino-acid sequence, 595 residues long: MTVDSALRSPMMHSPSTKDVKALRFIEEMTRNVDFVQKKVIREILSRNSDTEYLKRFGLKGFTDRKTFKTKVPVVIYDDLKPEIQRIANGDRSMILSSYPITEFLTSSGTSAGERKLMPTIDEDMDRRQLLYSLLMPVMNLYVPGLDKGKALYFLFVKTESKTPGGLPARPVLTSYYKSEQFKRRPNDPYNVYTSPNEAILCPDSSQSMYTQMLCGLLMRHEVLRLGAVFASGLLRAIGFLQTNWKELADDISTGTLSSRISDPAIKESMSKILTKPDQELADFITSVCGQDNSWEGIITKIWPNTKYLDVIVTGAMAQYIPMLEYYSGGLPMACTMYASSESYFGINLKPMCKPSEVSYTIMPNMAYFEFLPHHEVPTEKSELVELADVEVGKEYELVITTYAGLNRYRVGDILQVTGFYNSAPQFKFVRRKNVLLSIESDKTDEAELQSAVENASLLLGEQGTRVIEYTSYAETKTIPGHYVIYWELLVKDQTNPPNDEVMARCCLEMEESLNSVYRQSRVADKSIGPLEIRVVKNGTFEELMDYAISRGASINQYKVPRCVSFTPIMELLDSRVVSTHFSPALPHWSPERRR.

This sequence belongs to the IAA-amido conjugating enzyme family.

In terms of biological role, catalyzes the synthesis of indole-3-acetic acid (IAA)-amino acid conjugates, providing a mechanism for the plant to cope with the presence of excess auxin. Strongly reactive with Glu, Gln, Trp, Asp, Ala, Leu, Phe, Gly, Tyr, Met, Ile and Val. Little or no product formation with His, Ser, Thr, Arg, Lys, or Cys. Also active on pyruvic and butyric acid analogs of IAA, PAA and the synthetic auxin naphthaleneacetic acid (NAA). The two chlorinated synthetic auxin herbicides 2,4-D and 3,6-dichloro-o-anisic acid (dicamba) cannot be used as substrates. The polypeptide is Indole-3-acetic acid-amido synthetase GH3.3 (GH3.3) (Arabidopsis thaliana (Mouse-ear cress)).